Consider the following 365-residue polypeptide: Spermidine/putrescine import ATP-binding protein PotA (365 aa).

Residues Ile-9–Ile-239 enclose the ABC transporter domain. Gly-41–Thr-48 is an ATP binding site.

It belongs to the ABC transporter superfamily. Spermidine/putrescine importer (TC 3.A.1.11.1) family. In terms of assembly, the complex is composed of two ATP-binding proteins (PotA), two transmembrane proteins (PotB and PotC) and a solute-binding protein (PotD).

It is found in the cell membrane. The catalysed reaction is ATP + H2O + polyamine-[polyamine-binding protein]Side 1 = ADP + phosphate + polyamineSide 2 + [polyamine-binding protein]Side 1.. In terms of biological role, part of the ABC transporter complex PotABCD involved in spermidine/putrescine import. Responsible for energy coupling to the transport system. The sequence is that of Spermidine/putrescine import ATP-binding protein PotA from Lactiplantibacillus plantarum (strain ATCC BAA-793 / NCIMB 8826 / WCFS1) (Lactobacillus plantarum).